Reading from the N-terminus, the 445-residue chain is Phosphoglucosamine mutase (445 aa).

Residue serine 99 is the Phosphoserine intermediate of the active site. Mg(2+) is bound by residues serine 99, aspartate 242, aspartate 244, and aspartate 246. At serine 99 the chain carries Phosphoserine.

It belongs to the phosphohexose mutase family. The cofactor is Mg(2+). In terms of processing, activated by phosphorylation.

It carries out the reaction alpha-D-glucosamine 1-phosphate = D-glucosamine 6-phosphate. Functionally, catalyzes the conversion of glucosamine-6-phosphate to glucosamine-1-phosphate. The chain is Phosphoglucosamine mutase from Campylobacter lari (strain RM2100 / D67 / ATCC BAA-1060).